The following is a 399-amino-acid chain: Zinc finger HIT domain-containing protein 2 (399 aa).

M1 is modified (N-acetylmethionine). 8 residues coordinate Zn(2+): C7, C10, C22, C25, C30, C34, H38, and C41. An HIT-type zinc finger spans residues 7–41 (CGFCPAGEALPARYTCPRCNAPYCSLRCYRAHGAC). Disordered regions lie at residues 70-97 (RLRE…GLSG) and 152-175 (AEPE…AEPF). Over residues 86–96 (LGPGARPGGLS) the composition is skewed to gly residues. The residue at position 161 (T161) is a Phosphothreonine.

In terms of assembly, interacts (via HIT-type zinc finger) with RUVBL2 in the presence of ATP or ADP; shows a stronger interaction in the presence of ADP. As to expression, low expression in most tissues; highly expressed in testis; particularly in seminiferous tubules.

Functionally, may act as a bridging factor mediating the interaction between the R2TP/Prefoldin-like (R2TP/PFDL) complex and U5 small nuclear ribonucleoprotein (U5 snRNP). Required for the interaction of R2TP complex subunit RPAP3 and prefoldin-like subunit URI1 with U5 snRNP proteins EFTUD2 and PRPF8. May play a role in regulating the composition of the U5 snRNP complex. This is Zinc finger HIT domain-containing protein 2 (Znhit2) from Mus musculus (Mouse).